The following is a 248-amino-acid chain: ATP synthase subunit a, chloroplastic (248 aa).

The next 5 membrane-spanning stretches (helical) occupy residues 38–58, 96–116, 135–155, 200–220, and 221–241; these read QVLI…TIVV, VPFI…GALL, INTT…AGIS, LVVV…VMFL, and GLFT…AYIG.

It belongs to the ATPase A chain family. As to quaternary structure, F-type ATPases have 2 components, CF(1) - the catalytic core - and CF(0) - the membrane proton channel. CF(1) has five subunits: alpha(3), beta(3), gamma(1), delta(1), epsilon(1). CF(0) has four main subunits: a, b, b' and c.

The protein resides in the plastid. It is found in the chloroplast thylakoid membrane. In terms of biological role, key component of the proton channel; it plays a direct role in the translocation of protons across the membrane. The sequence is that of ATP synthase subunit a, chloroplastic from Amborella trichopoda.